The following is a 31-amino-acid chain: Palustrin-2c (31 aa).

The cysteines at positions 23 and 29 are disulfide-linked.

As to expression, expressed by the skin glands.

Its subcellular location is the secreted. Functionally, antimicrobial activity against Gram-negative bacterium E.coli. This Lithobates palustris (Pickerel frog) protein is Palustrin-2c.